A 282-amino-acid polypeptide reads, in one-letter code: MSIDNKLFVTEEDEEDRTQDRADVEDESNDIDMIADENGTNSAIANEQEEKSEEVKAEDDTGEEEEDDPVIEEFPLKISGEEESLHVFQYANRPRLVGRKPAEHPFISAARYKPKSHLWEIDIPLDEQAFYNKDKAESEWNGVNVQTLKGVGVENNGQYAAFVKDMQVYLVPIERVAQLKPFFKYIDDANVTRKQEDARRNPNPSSQRAQVVTMSVKSVNDPSQNRLTGSLLAHKVADEEANIELTWAEGTFEQFKDTIVKEAEDKTLVALEKQEDYIDNLV.

Positions 1 to 70 are disordered; it reads MSIDNKLFVT…TGEEEEDDPV (70 aa). Composition is skewed to acidic residues over residues 10–35 and 60–70; these read TEED…DMIA and DTGEEEEDDPV. Thr-61 carries the phosphothreonine modification.

In terms of assembly, component of the RNA polymerase III (Pol III) complex consisting of 17 subunits. Interacts with RPC53/RPC4. RPC53/RPC4, RPC37/RPC5 and RPC11/RPC10 probably form a Pol III subcomplex.

The protein resides in the nucleus. DNA-dependent RNA polymerase catalyzes the transcription of DNA into RNA using the four ribonucleoside triphosphates as substrates. Specific peripheric component of RNA polymerase III which synthesizes small RNAs, such as 5S rRNA and tRNAs. The RPC53/RPC4-RPC37/RPC5 subcomplex is required for terminator recognition and reinitiation. The chain is DNA-directed RNA polymerase III subunit RPC5 (RPC37) from Saccharomyces cerevisiae (strain ATCC 204508 / S288c) (Baker's yeast).